The chain runs to 385 residues: Heterogeneous nuclear ribonucleoprotein 87F (385 aa).

RRM domains follow at residues 24-101 and 115-192; these read RKLF…RAVP and KKLF…KAIA. 2 disordered regions span residues 192-289 and 305-385; these read AKQD…WNGG and GNGG…NRRY. 2 stretches are compositionally biased toward gly residues: residues 199–289 and 305–317; these read QGGG…WNGG and GNGG…GGFG. The segment covering 319–336 has biased composition (polar residues); it reads EYQQSYGGGPQRNSNFGN. Gly residues-rich tracts occupy residues 344-362 and 369-385; these read QGGG…GQGF and TGGG…NRRY.

Its subcellular location is the nucleus. It localises to the cytoplasm. This protein is a component of ribonucleosomes. Could be needed to organize a concentration gradient of a dorsalizing morphogen (Dm) originating in the germinal vesicle. The polypeptide is Heterogeneous nuclear ribonucleoprotein 87F (Hrb87F) (Drosophila melanogaster (Fruit fly)).